The chain runs to 366 residues: Growth hormone secretagogue receptor type 1 (366 aa).

The Extracellular segment spans residues 1–40 (MWNATLSEEPGYNLTLPDLGWDAPADNDSLTDELLPLFPA). Residues asparagine 3, asparagine 13, and asparagine 27 are each glycosylated (N-linked (GlcNAc...) asparagine). A helical membrane pass occupies residues 41–66 (PLLAGVTATCVALFVVGIAGNLLTML). Residues 67-72 (VVSRFR) are Cytoplasmic-facing. A helical transmembrane segment spans residues 73-96 (ELRTTTNLYLSSMAFSDLLIFLCM). At 97-117 (PLDLVRLWQYRPWNFGDLLCK) the chain is on the extracellular side. The cysteines at positions 116 and 198 are disulfide-linked. A helical membrane pass occupies residues 118–139 (LFQFVSESCTYATVLTITALSV). Residues 140–162 (ERYFAICFPLRAKVVVTKGRVKL) lie on the Cytoplasmic side of the membrane. A helical transmembrane segment spans residues 163–183 (VILVIWAVAFCSAGPIFVLVG). Residues 184–211 (VEHENGTDPRDTNECRATEFAVRSGLLT) are Extracellular-facing. Asparagine 188 carries N-linked (GlcNAc...) asparagine glycosylation. The helical transmembrane segment at 212 to 235 (VMVWVSSVFFFLPVFCLTVLYSLI) threads the bilayer. The Cytoplasmic portion of the chain corresponds to 236-263 (GRKLWRRKRGEAAVGASLRDQNHKQTVK). The helical transmembrane segment at 264–285 (MLAVVVFAFILCWLPFHVGRYL) threads the bilayer. The Extracellular portion of the chain corresponds to 286-302 (FSKSFEPGSLEIAQISQ). The chain crosses the membrane as a helical span at residues 303–326 (YCNLVSFVLFYLSAAINPILYNIM). Residues 327–366 (SKKYRVAVFKLLGFEPFSQRKLSTLKDESSRAWTETSINT) are Cytoplasmic-facing.

Belongs to the G-protein coupled receptor 1 family.

It localises to the cell membrane. Receptor for ghrelin, coupled to G-alpha-11 proteins. Stimulates growth hormone secretion. Also binds other growth hormone releasing peptides (GHRP) (e.g. Met-enkephalin and GHRP-6) as well as non-peptide, low molecular weight secretagogues (e.g. L-692,429, MK-0677, adenosine). The protein is Growth hormone secretagogue receptor type 1 (GHSR) of Mustela putorius furo (European domestic ferret).